A 250-amino-acid chain; its full sequence is Pyrroloquinoline-quinone synthase (250 aa).

Belongs to the PqqC family.

It catalyses the reaction 6-(2-amino-2-carboxyethyl)-7,8-dioxo-1,2,3,4,7,8-hexahydroquinoline-2,4-dicarboxylate + 3 O2 = pyrroloquinoline quinone + 2 H2O2 + 2 H2O + H(+). It participates in cofactor biosynthesis; pyrroloquinoline quinone biosynthesis. Functionally, ring cyclization and eight-electron oxidation of 3a-(2-amino-2-carboxyethyl)-4,5-dioxo-4,5,6,7,8,9-hexahydroquinoline-7,9-dicarboxylic-acid to PQQ. This is Pyrroloquinoline-quinone synthase from Xanthomonas oryzae pv. oryzae (strain KACC10331 / KXO85).